The sequence spans 305 residues: Tyrosine recombinase XerC (305 aa).

Residues 1-93 (MVLDGFAAHF…SWRQYCVWLV (93 aa)) enclose the Core-binding (CB) domain. The region spanning 114–294 (RVPKALPQEW…DFDHIARLYD (181 aa)) is the Tyr recombinase domain. Active-site residues include R155, K179, H246, R249, and H272. Y281 acts as the O-(3'-phospho-DNA)-tyrosine intermediate in catalysis.

Belongs to the 'phage' integrase family. XerC subfamily. As to quaternary structure, forms a cyclic heterotetrameric complex composed of two molecules of XerC and two molecules of XerD.

The protein localises to the cytoplasm. Functionally, site-specific tyrosine recombinase, which acts by catalyzing the cutting and rejoining of the recombining DNA molecules. The XerC-XerD complex is essential to convert dimers of the bacterial chromosome into monomers to permit their segregation at cell division. It also contributes to the segregational stability of plasmids. In Neisseria meningitidis serogroup C / serotype 2a (strain ATCC 700532 / DSM 15464 / FAM18), this protein is Tyrosine recombinase XerC.